The chain runs to 166 residues: NAD(P)H-quinone oxidoreductase subunit I, chloroplastic (166 aa).

2 consecutive 4Fe-4S ferredoxin-type domains span residues 55–84 (GRIHFEFDKCIACEVCVRVCPIDLPVVDWK) and 95–124 (LNYSIDFGICIFCGNCVEYCPTNCLSMTEE). Residues cysteine 64, cysteine 67, cysteine 70, cysteine 74, cysteine 104, cysteine 107, cysteine 110, and cysteine 114 each contribute to the [4Fe-4S] cluster site.

Belongs to the complex I 23 kDa subunit family. NDH is composed of at least 16 different subunits, 5 of which are encoded in the nucleus. [4Fe-4S] cluster is required as a cofactor.

It localises to the plastid. Its subcellular location is the chloroplast thylakoid membrane. The catalysed reaction is a plastoquinone + NADH + (n+1) H(+)(in) = a plastoquinol + NAD(+) + n H(+)(out). The enzyme catalyses a plastoquinone + NADPH + (n+1) H(+)(in) = a plastoquinol + NADP(+) + n H(+)(out). Its function is as follows. NDH shuttles electrons from NAD(P)H:plastoquinone, via FMN and iron-sulfur (Fe-S) centers, to quinones in the photosynthetic chain and possibly in a chloroplast respiratory chain. The immediate electron acceptor for the enzyme in this species is believed to be plastoquinone. Couples the redox reaction to proton translocation, and thus conserves the redox energy in a proton gradient. The sequence is that of NAD(P)H-quinone oxidoreductase subunit I, chloroplastic from Raillardella argentea (Silky raillardella).